We begin with the raw amino-acid sequence, 308 residues long: Eukaryotic translation initiation factor 3 subunit G-A (308 aa).

Disordered regions lie at residues 1-35 and 177-226; these read MPTG…KPDP and TGDK…ADDN. Residues 185–194 are compositionally biased toward low complexity; that stretch reads GAEPEPAQAP. Positions 209 to 226 are enriched in basic and acidic residues; that stretch reads GGSRRGESMQPNRRADDN. The 79-residue stretch at 227–305 folds into the RRM domain; the sequence is ATIRVTNLSE…LILNVEWAKP (79 aa).

Belongs to the eIF-3 subunit G family. Component of the eukaryotic translation initiation factor 3 (eIF-3) complex, which is composed of 13 subunits: eif3a, eif3b, eif3c, eif3d, eif3e, eif3f, eif3g, eif3h, eif3i, eif3j, eif3k, eif3l and eif3m.

The protein localises to the cytoplasm. Functionally, RNA-binding component of the eukaryotic translation initiation factor 3 (eIF-3) complex, which is involved in protein synthesis of a specialized repertoire of mRNAs and, together with other initiation factors, stimulates binding of mRNA and methionyl-tRNAi to the 40S ribosome. The eIF-3 complex specifically targets and initiates translation of a subset of mRNAs involved in cell proliferation. This subunit can bind 18S rRNA. This is Eukaryotic translation initiation factor 3 subunit G-A (eif3g-a) from Xenopus laevis (African clawed frog).